Consider the following 232-residue polypeptide: dTTP/UTP pyrophosphatase (232 aa).

Residue Asp-103 is the Proton acceptor of the active site.

Belongs to the Maf family. YhdE subfamily. A divalent metal cation serves as cofactor.

Its subcellular location is the cytoplasm. The enzyme catalyses dTTP + H2O = dTMP + diphosphate + H(+). It catalyses the reaction UTP + H2O = UMP + diphosphate + H(+). The catalysed reaction is 5-methyl-UTP + H2O = 5-methyl-UMP + diphosphate + H(+). It carries out the reaction psi-UTP + H2O = psi-UMP + diphosphate + H(+). Its function is as follows. Nucleoside triphosphate pyrophosphatase that hydrolyzes dTTP and UTP. Can also hydrolyze the modified nucleotides 5-methyl-UTP (m(5)UTP) and pseudo-UTP. Has weak activity with CTP. May have a dual role in cell division arrest and in preventing the incorporation of modified nucleotides into cellular nucleic acids. In Saccharomyces cerevisiae (strain ATCC 204508 / S288c) (Baker's yeast), this protein is dTTP/UTP pyrophosphatase.